We begin with the raw amino-acid sequence, 87 residues long: Small ribosomal subunit protein uS15 (87 aa).

The disordered stretch occupies residues 1–22; sequence MSEINKAEIVASNARAPSDTGS.

This sequence belongs to the universal ribosomal protein uS15 family. Part of the 30S ribosomal subunit. Forms a bridge to the 50S subunit in the 70S ribosome, contacting the 23S rRNA.

One of the primary rRNA binding proteins, it binds directly to 16S rRNA where it helps nucleate assembly of the platform of the 30S subunit by binding and bridging several RNA helices of the 16S rRNA. In terms of biological role, forms an intersubunit bridge (bridge B4) with the 23S rRNA of the 50S subunit in the ribosome. The sequence is that of Small ribosomal subunit protein uS15 from Leptothrix cholodnii (strain ATCC 51168 / LMG 8142 / SP-6) (Leptothrix discophora (strain SP-6)).